We begin with the raw amino-acid sequence, 223 residues long: Methanol utilization control regulatory protein MoxX (223 aa).

In terms of domain architecture, Response regulatory spans 16-133; that stretch reads QILIVDDHPV…EICAAFTEVA (118 aa). Residues 155 to 220 form the HTH luxR-type domain; the sequence is PGTSAPRLTG…DLVVKGIRYF (66 aa). The H-T-H motif DNA-binding region spans 179–198; that stretch reads YRDIADRACISYKTVSNVSL.

Post-translationally, phosphorylated by MoxY.

Its subcellular location is the cytoplasm. Its function is as follows. Member of the two-component regulatory system MoxY/MoxX probably involved in the regulation of the methanol dehydrogenase expression. The chain is Methanol utilization control regulatory protein MoxX (moxX) from Paracoccus denitrificans.